Consider the following 260-residue polypeptide: Acyl-[acyl-carrier-protein]--UDP-N-acetylglucosamine O-acyltransferase (260 aa).

It belongs to the transferase hexapeptide repeat family. LpxA subfamily. As to quaternary structure, homotrimer.

It localises to the cytoplasm. The catalysed reaction is a (3R)-hydroxyacyl-[ACP] + UDP-N-acetyl-alpha-D-glucosamine = a UDP-3-O-[(3R)-3-hydroxyacyl]-N-acetyl-alpha-D-glucosamine + holo-[ACP]. The protein operates within glycolipid biosynthesis; lipid IV(A) biosynthesis; lipid IV(A) from (3R)-3-hydroxytetradecanoyl-[acyl-carrier-protein] and UDP-N-acetyl-alpha-D-glucosamine: step 1/6. Involved in the biosynthesis of lipid A, a phosphorylated glycolipid that anchors the lipopolysaccharide to the outer membrane of the cell. This chain is Acyl-[acyl-carrier-protein]--UDP-N-acetylglucosamine O-acyltransferase, found in Aliarcobacter butzleri (strain RM4018) (Arcobacter butzleri).